Consider the following 419-residue polypeptide: Carboxypeptidase A1 (419 aa).

Residues 1–16 form the signal peptide; it reads MWGLLIFSVLLGGVLA. Residues 17 to 110 constitute a propeptide, activation peptide; sequence KEDFVGHQVL…QEQMFASQGR (94 aa). The region spanning 121–414 is the Peptidase M14 domain; the sequence is TYHTLEEIYD…LALLTIMEHT (294 aa). Zn(2+) is bound by residues histidine 179 and glutamate 182. Substrate contacts are provided by residues 179–182, arginine 237, and 254–255; these read HSRE and NR. Cysteines 248 and 271 form a disulfide. A Zn(2+)-binding site is contributed by histidine 306. Substrate contacts are provided by residues 307–308 and tyrosine 358; that span reads SY. Glutamate 380 serves as the catalytic Proton donor/acceptor.

It belongs to the peptidase M14 family. Monomer. May form a complex with proelastase 2. Zn(2+) is required as a cofactor.

It is found in the secreted. The enzyme catalyses Release of a C-terminal amino acid, but little or no action with -Asp, -Glu, -Arg, -Lys or -Pro.. It carries out the reaction leukotriene C4 + H2O = leukotriene F4 + glycine. In terms of biological role, carboxypeptidase that catalyzes the release of a C-terminal amino acid, but has little or no action with -Asp, -Glu, -Arg, -Lys or -Pro. Catalyzes the conversion of leukotriene C4 to leukotriene F4 via the hydrolysis of an amide bond. This chain is Carboxypeptidase A1 (CPA1), found in Sus scrofa (Pig).